The primary structure comprises 439 residues: Ribosomal protein uS12 methylthiotransferase RimO (439 aa).

Positions 2–114 (SKLYLMSLGC…VDEMILKKTN (113 aa)) constitute an MTTase N-terminal domain. Residues Cys-11, Cys-45, Cys-77, Cys-146, Cys-150, and Cys-153 each contribute to the [4Fe-4S] cluster site. The Radical SAM core domain maps to 132–363 (TGSNSHAFIK…VNEVIEKSFE (232 aa)).

This sequence belongs to the methylthiotransferase family. RimO subfamily. [4Fe-4S] cluster serves as cofactor.

It is found in the cytoplasm. The enzyme catalyses L-aspartate(89)-[ribosomal protein uS12]-hydrogen + (sulfur carrier)-SH + AH2 + 2 S-adenosyl-L-methionine = 3-methylsulfanyl-L-aspartate(89)-[ribosomal protein uS12]-hydrogen + (sulfur carrier)-H + 5'-deoxyadenosine + L-methionine + A + S-adenosyl-L-homocysteine + 2 H(+). Its function is as follows. Catalyzes the methylthiolation of an aspartic acid residue of ribosomal protein uS12. The sequence is that of Ribosomal protein uS12 methylthiotransferase RimO from Campylobacter jejuni (strain RM1221).